A 475-amino-acid polypeptide reads, in one-letter code: Solute carrier family 46 member 2 (475 aa).

Residues 1-23 are Cytoplasmic-facing; it reads MSPEVTCPRRGHLPRFHPRTWVE. Residues 24-44 traverse the membrane as a helical segment; sequence PVVASSQVAASLYDAGLLLVV. Residues 45–78 lie on the Extracellular side of the membrane; it reads KASYGTGGSSNHSASPSPRGALEDQQQRAISNFY. An N-linked (GlcNAc...) asparagine glycan is attached at Asn55. Residues 79–99 form a helical membrane-spanning segment; the sequence is IIYNLVVGLSPLLSAYGLGWL. At 100–108 the chain is on the cytoplasmic side; that stretch reads SDRYHRKIS. Residues 109 to 129 form a helical membrane-spanning segment; the sequence is ICMSLLGFLLSRLGLLLKVLL. Residues 130–138 lie on the Extracellular side of the membrane; that stretch reads DWPVEVLYG. The chain crosses the membrane as a helical span at residues 139-159; it reads AAALNGLFGGFSAFWSGVMAL. At 160-172 the chain is on the cytoplasmic side; the sequence is GSLGSSEGRRSVR. Residues 173–193 form a helical membrane-spanning segment; that stretch reads LILIDLMLGLAGFCGSMASGH. The Extracellular portion of the chain corresponds to 194–205; sequence LFKQMAGHSGQG. The chain crosses the membrane as a helical span at residues 206–226; the sequence is LILTACSVSCASFALLYSLLV. Residues 227-282 lie on the Cytoplasmic side of the membrane; sequence LKVPESVAKPSQELPAVDTVSGTVGTYRTLDPDQLDQQYAVGHPPSPGKAKPHKTT. A helical transmembrane segment spans residues 283–303; sequence IALLFVGAIIYDLAVVGTVDV. At 304 to 320 the chain is on the extracellular side; sequence IPLFVLREPLGWNQVQV. A helical transmembrane segment spans residues 321–341; it reads GYGMAAGYTIFITSFLGVLVF. At 342-347 the chain is on the cytoplasmic side; it reads SRCFRD. Residues 348-368 form a helical membrane-spanning segment; it reads TTMIMIGMVSFGSGALLLAFV. Residues 369-370 are Extracellular-facing; it reads KE. Residues 371 to 391 form a helical membrane-spanning segment; it reads TYMFYIARAVMLFALIPVTTI. Residues 392 to 406 are Cytoplasmic-facing; it reads RSAMSKLIKGSSYGK. A helical membrane pass occupies residues 407–427; that stretch reads VFVILQLSLALTGVVTSTLYN. Topologically, residues 428–435 are extracellular; that stretch reads KIYQLTMD. The helical transmembrane segment at 436 to 456 threads the bilayer; it reads MFVGSCFALSSFLSFLAIIPI. The Cytoplasmic segment spans residues 457 to 475; sequence SIVAYKQVPLSPYGDIIEK.

This sequence belongs to the major facilitator superfamily. SLC46A family. Glycosylated. Strongly expressed in the adult thymus. Expressed in spleen, lymph nodes, thymus, PBL, bone marrow and fetal liver. Expressed in monocytes and pre-dendridic cells.

The protein localises to the endosome membrane. It is found in the cell membrane. It carries out the reaction N-acetyl-beta-D-glucosaminyl-(1-&gt;4)-1,6-anhydro-N-acetyl-beta-D-muramoyl-L-alanyl-gamma-D-glutamyl-meso-2,6-diaminopimeloyl-D-alanine(out) + n H(+)(out) = N-acetyl-beta-D-glucosaminyl-(1-&gt;4)-1,6-anhydro-N-acetyl-beta-D-muramoyl-L-alanyl-gamma-D-glutamyl-meso-2,6-diaminopimeloyl-D-alanine(in) + n H(+)(in). The catalysed reaction is L-alanyl-gamma-D-glutamyl-meso-2,6-diaminopimelate(out) + n H(+)(out) = L-alanyl-gamma-D-glutamyl-meso-2,6-diaminopimelate(in) + n H(+)(in). The enzyme catalyses N-acetyl-D-muramoyl-L-alanyl-D-isoglutamine(out) + n H(+)(out) = N-acetyl-D-muramoyl-L-alanyl-D-isoglutamine(in) + n H(+)(in). It catalyses the reaction 2',3'-cGAMP(out) + n H(+)(out) = 2',3'-cGAMP(in) + n H(+)(in). It carries out the reaction 3',3'-cGAMP(out) + n H(+)(out) = 3',3'-cGAMP(in) + n H(+)(in). In terms of biological role, proton-coupled transporter that delivers pathogen-associated or danger-associated molecular patterns to cytosolic pattern recognition receptors as part of the innate immune response to microbes or tissue injury. Has selectivity toward muropeptides that contain the amino acid diaminopimelic acid (DAP-type peptidoglycan muropeptides) including Tri-DAP and tracheal toxin (TCT), common in Gram-negative bacteria and Gram-positive bacilli. In the context of immune recognition of skin microbiota, shuttles bacterial muropeptides across the endolysosomal membranes into the cytosol for recognition by NOD1, triggering MYD88-dependent secretion of IL1A and neutrophil recruitment in a pyroptosis-type inflammatory process. To a lesser extent and redundantly, transports muramyl dipeptides derived from most bacterial proteoglycans, eliciting NOD2 receptor activation and downstream inflammatory responses. Postulated to function as a dominant importer of cyclic GMP-AMP dinucleotides (cGAMPs) in monocyte and macrophage cell lineages. Selectively imports cGAMPs derived from pathogenic bacteria such as 3'3'-cGAMP thus providing for differential immune recognition of pathogenic versus commensal bacteria. During tumorigenesis may transport extracellular tumor-derived 2'3'-cGAMP across the plasma membrane of M1-polarized macrophages to activate the anti-tumoral stimulator of interferon genes (STING) pathway. The transport mechanism, its electrogenicity and stoichiometry remain to be elucidated. The polypeptide is Solute carrier family 46 member 2 (Homo sapiens (Human)).